A 242-amino-acid chain; its full sequence is ATP-dependent dethiobiotin synthetase BioD 1 (242 aa).

12–17 (NVGKTT) is a binding site for ATP. Threonine 16 serves as a coordination point for Mg(2+). Residue lysine 37 is part of the active site. Aspartate 66 is an ATP binding site. 2 residues coordinate Mg(2+): aspartate 66 and glutamate 124. ATP-binding positions include 184–185 (NR), 213–215 (PYL), and glutamate 220.

It belongs to the dethiobiotin synthetase family. Homodimer. Mg(2+) serves as cofactor.

It is found in the cytoplasm. The enzyme catalyses (7R,8S)-7,8-diammoniononanoate + CO2 + ATP = (4R,5S)-dethiobiotin + ADP + phosphate + 3 H(+). Its pathway is cofactor biosynthesis; biotin biosynthesis; biotin from 7,8-diaminononanoate: step 1/2. Its function is as follows. Catalyzes a mechanistically unusual reaction, the ATP-dependent insertion of CO2 between the N7 and N8 nitrogen atoms of 7,8-diaminopelargonic acid (DAPA, also called 7,8-diammoniononanoate) to form a ureido ring. This chain is ATP-dependent dethiobiotin synthetase BioD 1, found in Haemophilus influenzae (strain ATCC 51907 / DSM 11121 / KW20 / Rd).